A 189-amino-acid polypeptide reads, in one-letter code: Putative manganese efflux pump MntP (189 aa).

Transmembrane regions (helical) follow at residues 3-23 (PVSLIFLAFAMSTDAFAAAIG), 41-61 (IIFGVIEAITPLVGWLLGQAA), 65-85 (VADWDHWIAFVLLVLLGLHMI), 106-128 (WILAVTALATSIDALAVGVGLAF), 141-161 (GLATMTMVTLGTMLGRALGAV), and 168-188 (MVGGVVLILVGATILYEHLSA).

Belongs to the MntP (TC 9.B.29) family.

The protein localises to the cell inner membrane. In terms of biological role, probably functions as a manganese efflux pump. This chain is Putative manganese efflux pump MntP, found in Pseudomonas aeruginosa (strain LESB58).